The primary structure comprises 154 residues: Probable archaeosortase D (154 aa).

The next 4 membrane-spanning stretches (helical) occupy residues 6–26, 57–77, 91–111, and 125–145; these read AIYI…LKML, IIEI…LGYI, YSVF…ILII, and VISF…IYLL. The Acyl-thioester intermediate role is filled by Cys-64. The active-site Proton donor is the Arg-106.

Belongs to the exosortase/archaeosortase family. Archaeosortase D subfamily.

The protein localises to the cell membrane. Functionally, transpeptidase that recognizes and modifies its substrate by proteolytic cleavage of a sorting signal. Following cleavage, a covalent intermediate is formed via a thioester bond between the archaeosortase and its substrate, which is then transferred and covalently attached to the cell membrane. The protein is Probable archaeosortase D of Methanocaldococcus jannaschii (strain ATCC 43067 / DSM 2661 / JAL-1 / JCM 10045 / NBRC 100440) (Methanococcus jannaschii).